A 1227-amino-acid polypeptide reads, in one-letter code: Pesticidal crystal protein Cry1Be (1227 aa).

It belongs to the delta endotoxin family.

Promotes colloidosmotic lysis by binding to the midgut epithelial cells of many lepidopteran larvae. This chain is Pesticidal crystal protein Cry1Be (cry1Be), found in Bacillus thuringiensis.